The following is a 201-amino-acid chain: Peptide deformylase (201 aa).

Residues Cys114 and His156 each coordinate Fe cation. Glu157 is a catalytic residue. Residue His160 coordinates Fe cation.

It belongs to the polypeptide deformylase family. Fe(2+) is required as a cofactor.

It catalyses the reaction N-terminal N-formyl-L-methionyl-[peptide] + H2O = N-terminal L-methionyl-[peptide] + formate. Its function is as follows. Removes the formyl group from the N-terminal Met of newly synthesized proteins. Requires at least a dipeptide for an efficient rate of reaction. N-terminal L-methionine is a prerequisite for activity but the enzyme has broad specificity at other positions. The polypeptide is Peptide deformylase (Tropheryma whipplei (strain TW08/27) (Whipple's bacillus)).